Consider the following 320-residue polypeptide: GDSL esterase/lipase At3g43570 (320 aa).

The N-terminal stretch at Met-1–Ala-19 is a signal peptide. A glycan (N-linked (GlcNAc...) asparagine) is linked at Asn-25. Ser-37 serves as the catalytic Nucleophile. A glycan (N-linked (GlcNAc...) asparagine) is linked at Asn-287. Active-site residues include Asp-295 and His-298.

Belongs to the 'GDSL' lipolytic enzyme family.

The protein resides in the secreted. In Arabidopsis thaliana (Mouse-ear cress), this protein is GDSL esterase/lipase At3g43570.